The primary structure comprises 196 residues: Protein kinase OspG (196 aa).

It belongs to the protein kinase superfamily. In terms of processing, autophosphorylated.

The protein localises to the secreted. The protein resides in the host cell. Its function is as follows. Effector proteins function to alter host cell physiology and promote bacterial survival in host tissues. This protein is a kinase that is involved in down-regulation of the host innate response induced by invasive bacteria. The protein is Protein kinase OspG (ospG) of Shigella flexneri serotype X (strain 2002017).